Reading from the N-terminus, the 331-residue chain is 5'-AMP-activated protein kinase subunit gamma-1 (331 aa).

Polar residues predominate over residues Met-1–Ala-12. Positions Met-1–Asn-26 are disordered. 3 consecutive CBS domains span residues Pro-43–Leu-103, Ser-125–Glu-187, and Ile-198–Val-260. Residues Arg-70, Met-85 to Asp-90, Val-130, His-151 to Arg-152, and Lys-170 each bind ADP. Residues Arg-70, Met-85–Asp-90, Val-130, His-151, His-151–Arg-152, Lys-170, Thr-200, Ala-205, Ser-226–Ala-227, and Ser-242–Asp-245 contribute to the AMP site. ATP contacts are provided by residues Arg-70, Met-85–Asp-90, Val-130, His-151–Arg-152, Arg-152, and Lys-170. The AMPK pseudosubstrate motif lies at Leu-138–Glu-159. Ser-242–Asp-245 contributes to the ADP binding site. Ser-242–Asp-245 is a binding site for ATP. At Ser-261 the chain carries Phosphoserine; by ULK1. The residue at position 263 (Thr-263) is a Phosphothreonine; by ULK1. Arg-269 lines the ADP pocket. An AMP-binding site is contributed by Arg-269. ATP is bound at residue Arg-269. Position 270 is a phosphoserine; by ULK1 (Ser-270). Positions Tyr-272–Lys-329 constitute a CBS 4 domain. ADP-binding positions include Leu-277 and His-298–Arg-299. AMP contacts are provided by residues Leu-277, His-298, His-298–Arg-299, and Ser-314–Asp-317. Residues Leu-277 and His-298 to Arg-299 contribute to the ATP site.

The protein belongs to the 5'-AMP-activated protein kinase gamma subunit family. As to quaternary structure, AMPK is a heterotrimer of an alpha catalytic subunit (PRKAA1 or PRKAA2), a beta (PRKAB1 or PRKAB2) and a gamma non-catalytic subunits (PRKAG1, PRKAG2 or PRKAG3). Interacts with FNIP1 and FNIP2. Post-translationally, phosphorylated by ULK1 and ULK2; leading to negatively regulate AMPK activity and suggesting the existence of a regulatory feedback loop between ULK1, ULK2 and AMPK. In terms of processing, glycosylated; O-GlcNAcylated by OGT, promoting the AMP-activated protein kinase (AMPK) activity.

In terms of biological role, AMP/ATP-binding subunit of AMP-activated protein kinase (AMPK), an energy sensor protein kinase that plays a key role in regulating cellular energy metabolism. In response to reduction of intracellular ATP levels, AMPK activates energy-producing pathways and inhibits energy-consuming processes: inhibits protein, carbohydrate and lipid biosynthesis, as well as cell growth and proliferation. AMPK acts via direct phosphorylation of metabolic enzymes, and by longer-term effects via phosphorylation of transcription regulators. Also acts as a regulator of cellular polarity by remodeling the actin cytoskeleton; probably by indirectly activating myosin. Gamma non-catalytic subunit mediates binding to AMP, ADP and ATP, leading to activate or inhibit AMPK: AMP-binding results in allosteric activation of alpha catalytic subunit (PRKAA1 or PRKAA2) both by inducing phosphorylation and preventing dephosphorylation of catalytic subunits. ADP also stimulates phosphorylation, without stimulating already phosphorylated catalytic subunit. ATP promotes dephosphorylation of catalytic subunit, rendering the AMPK enzyme inactive. The polypeptide is 5'-AMP-activated protein kinase subunit gamma-1 (PRKAG1) (Homo sapiens (Human)).